A 311-amino-acid chain; its full sequence is D-alanine--D-alanine ligase (311 aa).

Residues 106-301 enclose the ATP-grasp domain; the sequence is KLLWRGAELP…FDELCWRILL (196 aa). Residue 132–187 participates in ATP binding; sequence IGSVGLPLMIKPAHEGSSIGMAKVERPEELEAARAEAARYDDLVLAERWIEGGEYT. Residues Asp255, Glu268, and Asn270 each coordinate Mg(2+).

This sequence belongs to the D-alanine--D-alanine ligase family. Requires Mg(2+) as cofactor. Mn(2+) serves as cofactor.

It is found in the cytoplasm. It catalyses the reaction 2 D-alanine + ATP = D-alanyl-D-alanine + ADP + phosphate + H(+). Its pathway is cell wall biogenesis; peptidoglycan biosynthesis. Its function is as follows. Cell wall formation. This is D-alanine--D-alanine ligase from Alkalilimnicola ehrlichii (strain ATCC BAA-1101 / DSM 17681 / MLHE-1).